The sequence spans 502 residues: Glycerol kinase (502 aa).

Threonine 14 serves as a coordination point for ADP. Positions 14, 15, and 16 each coordinate ATP. Threonine 14 is a sn-glycerol 3-phosphate binding site. Arginine 18 contacts ADP. Sn-glycerol 3-phosphate is bound by residues arginine 84, glutamate 85, tyrosine 136, and aspartate 246. Glycerol-binding residues include arginine 84, glutamate 85, tyrosine 136, aspartate 246, and glutamine 247. The ADP site is built by threonine 268 and glycine 311. ATP is bound by residues threonine 268, glycine 311, glutamine 315, and glycine 412. Residues glycine 412 and asparagine 416 each contribute to the ADP site.

The protein belongs to the FGGY kinase family. Homotetramer and homodimer (in equilibrium). Heterodimer with EIIA-Glc. Binds 1 zinc ion per glycerol kinase EIIA-Glc dimer. The zinc ion is important for dimerization.

The enzyme catalyses glycerol + ATP = sn-glycerol 3-phosphate + ADP + H(+). Its pathway is polyol metabolism; glycerol degradation via glycerol kinase pathway; sn-glycerol 3-phosphate from glycerol: step 1/1. Activity of this regulatory enzyme is affected by several metabolites. Allosterically and non-competitively inhibited by fructose 1,6-bisphosphate (FBP) and unphosphorylated phosphocarrier protein EIIA-Glc (III-Glc), an integral component of the bacterial phosphotransferase (PTS) system. Its function is as follows. Key enzyme in the regulation of glycerol uptake and metabolism. Catalyzes the phosphorylation of glycerol to yield sn-glycerol 3-phosphate. The chain is Glycerol kinase from Shigella dysenteriae serotype 1 (strain Sd197).